The sequence spans 382 residues: Galactokinase (382 aa).

Glutamate 34–aspartate 37 is a binding site for substrate. Residue glycine 124–serine 130 coordinates ATP. Residues serine 130 and glutamate 162 each coordinate Mg(2+). The Proton acceptor role is filled by aspartate 174. Tyrosine 223 provides a ligand contact to substrate.

Belongs to the GHMP kinase family. GalK subfamily.

It localises to the cytoplasm. It carries out the reaction alpha-D-galactose + ATP = alpha-D-galactose 1-phosphate + ADP + H(+). Its pathway is carbohydrate metabolism; galactose metabolism. Catalyzes the transfer of the gamma-phosphate of ATP to D-galactose to form alpha-D-galactose-1-phosphate (Gal-1-P). This chain is Galactokinase, found in Citrobacter koseri (strain ATCC BAA-895 / CDC 4225-83 / SGSC4696).